Here is a 470-residue protein sequence, read N- to C-terminus: 1-aminocyclopropane-1-carboxylate synthase 5 (470 aa).

Substrate is bound by residues E47 and Y85. An N6-(pyridoxal phosphate)lysine modification is found at K272. Position 461 is a phosphoserine (S461).

Belongs to the class-I pyridoxal-phosphate-dependent aminotransferase family. As to quaternary structure, homodimer and heterodimer. In vivo, the relevance of heterodimerization with other ACS enzymes is however unsure. Interacts (via its C-terminal region) with FEI1, FEI2, ETO1, EOL1 and EOL2. Interacts with GRF3. Pyridoxal 5'-phosphate serves as cofactor. May be processed at its C-terminus. In terms of processing, ubiquitinated. The interaction with ETO1 (and possibly EOL1 and EOL2) mediate its proteasome-dependent degradation. Its stability and degradation plays a central role in ethylene biosynthesis. As to expression, expressed in roots and siliques.

It carries out the reaction S-adenosyl-L-methionine = 1-aminocyclopropane-1-carboxylate + S-methyl-5'-thioadenosine + H(+). It participates in alkene biosynthesis; ethylene biosynthesis via S-adenosyl-L-methionine; ethylene from S-adenosyl-L-methionine: step 1/2. 1-aminocyclopropane-1-carboxylate synthase (ACS) enzymes catalyze the conversion of S-adenosyl-L-methionine (SAM) into 1-aminocyclopropane-1-carboxylate (ACC), a direct precursor of ethylene. In Arabidopsis thaliana (Mouse-ear cress), this protein is 1-aminocyclopropane-1-carboxylate synthase 5 (ACS5).